A 506-amino-acid polypeptide reads, in one-letter code: Maturase K (506 aa).

The protein belongs to the intron maturase 2 family. MatK subfamily.

It localises to the plastid. Its subcellular location is the chloroplast. Functionally, usually encoded in the trnK tRNA gene intron. Probably assists in splicing its own and other chloroplast group II introns. The chain is Maturase K from Sullivantia sullivantii (Sullivant's coolwort).